Consider the following 254-residue polypeptide: Arginine/ornithine transport ATP-binding protein AotP (254 aa).

The region spanning 4 to 249 (LEVQDLHKRY…PQSDRLKQFL (246 aa)) is the ABC transporter domain. An ATP-binding site is contributed by 36–43 (GSSGSGKS).

The protein belongs to the ABC transporter superfamily.

Its subcellular location is the cell inner membrane. In terms of biological role, part of the arginine-inducible binding-protein-dependent transport system for arginine and ornithine. Probably responsible for energy coupling to the transport system. In Pseudomonas aeruginosa (strain ATCC 15692 / DSM 22644 / CIP 104116 / JCM 14847 / LMG 12228 / 1C / PRS 101 / PAO1), this protein is Arginine/ornithine transport ATP-binding protein AotP (aotP).